Here is a 251-residue protein sequence, read N- to C-terminus: Retinoic acid early-inducible protein 1-epsilon (251 aa).

Residues 1-28 form the signal peptide; that stretch reads MAKAAVTKRHHFMIQKLLILLSYGYTNG. C37 and C56 form a disulfide bridge. 5 N-linked (GlcNAc...) asparagine glycosylation sites follow: N38, N70, N83, N141, and N154. Residues C88 and C188 are joined by a disulfide bond. Positions 196–228 are disordered; the sequence is LKQSKEKPRSTSRSPSITQLTSTSPLPPPSHST. Residues 209–219 show a composition bias toward low complexity; sequence SPSITQLTSTS. S225 carries the GPI-anchor amidated serine lipid modification. A propeptide spans 226–251 (removed in mature form); it reads HSTSKKGFISVGLIFISLLFAFAFAM.

It belongs to the NKG2D ligand family. In terms of processing, glycosylated.

The protein resides in the cell membrane. Acts as a ligand for KLRK1. The chain is Retinoic acid early-inducible protein 1-epsilon (Raet1e) from Mus musculus (Mouse).